The sequence spans 20 residues: Methyl-coenzyme M reductase subunit gamma (20 aa).

The interval Ala1 to His20 is disordered.

Belongs to the methyl-coenzyme M reductase gamma subunit family. MCR from M.thermophila is a heterotrimer composed of an alpha, a beta, and a gamma subunit. It depends on coenzyme F430 as a cofactor.

It is found in the cytoplasm. It carries out the reaction coenzyme B + methyl-coenzyme M = methane + coenzyme M-coenzyme B heterodisulfide. It functions in the pathway one-carbon metabolism; methyl-coenzyme M reduction; methane from methyl-coenzyme M: step 1/1. Component of the methyl-coenzyme M reductase (MCR) I that catalyzes the reductive cleavage of methyl-coenzyme M (CoM-S-CH3 or 2-(methylthio)ethanesulfonate) using coenzyme B (CoB or 7-mercaptoheptanoylthreonine phosphate) as reductant which results in the production of methane and the mixed heterodisulfide of CoB and CoM (CoM-S-S-CoB). This is the final step in methanogenesis. The polypeptide is Methyl-coenzyme M reductase subunit gamma (Methanosarcina thermophila).